The chain runs to 214 residues: Outer-membrane lipoprotein LolB (214 aa).

A signal peptide spans 1–25 (MNNLKRFTESIFSCIALSTLLFLGG). Cysteine 26 is lipidated: N-palmitoyl cysteine. Residue cysteine 26 is the site of S-diacylglycerol cysteine attachment.

This sequence belongs to the LolB family. As to quaternary structure, monomer.

It localises to the cell outer membrane. Its function is as follows. Plays a critical role in the incorporation of lipoproteins in the outer membrane after they are released by the LolA protein. The chain is Outer-membrane lipoprotein LolB from Shewanella putrefaciens (strain CN-32 / ATCC BAA-453).